The sequence spans 658 residues: Putative arrestin-related trafficking adapter C2D10.04 (658 aa).

2 disordered regions span residues 21–107 (LHHQ…LTWS) and 638–658 (REEA…EIPR). Low complexity predominate over residues 39-81 (NRSSNSGLNRRNSVFGLPSSGLSSRLSKPSLSSINNSNNSSSN). Polar residues predominate over residues 96-107 (RNMSNKPPLTWS). Ser653 carries the post-translational modification Phosphoserine.

The protein belongs to the ALY1 family.

It is found in the cytoplasm. May regulate endocytosis in response to extracellular stimuli. This Schizosaccharomyces pombe (strain 972 / ATCC 24843) (Fission yeast) protein is Putative arrestin-related trafficking adapter C2D10.04.